The following is a 152-amino-acid chain: Proteolipid protein 2 (152 aa).

The MARVEL domain occupies 19 to 137; it reads FSRTRKGFLL…DAYITFPLRQ (119 aa). 3 helical membrane passes run 25 to 45, 48 to 68, and 85 to 105; these read GFLL…FSTS, GYSF…VVYM, and FFRT…VLVE. The N-linked (GlcNAc...) asparagine glycan is linked to N108. Residues 112–132 traverse the membrane as a helical segment; the sequence is IAAGALGLCAAGLFGYDAYIT.

It is found in the membrane. May play a role in cell differentiation in the intestinal epithelium. This is Proteolipid protein 2 (PLP2) from Bos taurus (Bovine).